Here is a 258-residue protein sequence, read N- to C-terminus: Phosphate import ATP-binding protein PstB (258 aa).

One can recognise an ABC transporter domain in the interval 13–253; that stretch reads ITVENLNLWY…PREKSTEDYI (241 aa). 45-52 lines the ATP pocket; it reads GPSGCGKS.

Belongs to the ABC transporter superfamily. Phosphate importer (TC 3.A.1.7) family. As to quaternary structure, the complex is composed of two ATP-binding proteins (PstB), two transmembrane proteins (PstC and PstA) and a solute-binding protein (PstS).

Its subcellular location is the cell membrane. It carries out the reaction phosphate(out) + ATP + H2O = ADP + 2 phosphate(in) + H(+). Functionally, part of the ABC transporter complex PstSACB involved in phosphate import. Responsible for energy coupling to the transport system. The chain is Phosphate import ATP-binding protein PstB from Methanosarcina mazei (strain ATCC BAA-159 / DSM 3647 / Goe1 / Go1 / JCM 11833 / OCM 88) (Methanosarcina frisia).